The sequence spans 118 residues: Non-specific lipid-transfer protein 1 (118 aa).

An N-terminal signal peptide occupies residues 1–25 (MASLRVSCLVALMCMVVISAPMAEA). Cystine bridges form between C29-C76, C39-C53, C54-C99, and C74-C113.

It belongs to the plant LTP family.

Its function is as follows. Plant non-specific lipid-transfer proteins transfer phospholipids as well as galactolipids across membranes. May play a role in wax or cutin deposition in the cell walls of expanding epidermal cells and certain secretory tissues. This is Non-specific lipid-transfer protein 1 from Lens culinaris (Lentil).